Here is a 526-residue protein sequence, read N- to C-terminus: Type 2 glycosyltransferase (526 aa).

The chain crosses the membrane as a helical span at residues 25 to 45 (PSFDFWYSSTFWLYLFLGLWF). Asn298 and Asn317 each carry an N-linked (GlcNAc...) asparagine glycan. The next 3 membrane-spanning stretches (helical) occupy residues 340 to 360 (FATF…SCWW), 375 to 395 (WSQF…GLFI), and 403 to 423 (FLPV…YALI). N-linked (GlcNAc...) asparagine glycosylation is found at Asn426 and Asn517.

This sequence belongs to the GT2 glycosyltransferase family.

It is found in the cell membrane. Its subcellular location is the secreted. The protein localises to the cell wall. In terms of biological role, glycosyltransferase involved in the maintenance of the outermost surface of the fungal cell wall. Likely functions in the synthesis of a currently unknown, potentially minor but widespread, extracellular or outer cell wall polysaccharide which plays a key role in facilitating many interactions between plants and fungi by enabling hyphal growth on solid matrices. This chain is Type 2 glycosyltransferase, found in Gibberella zeae (strain ATCC MYA-4620 / CBS 123657 / FGSC 9075 / NRRL 31084 / PH-1) (Wheat head blight fungus).